Reading from the N-terminus, the 462-residue chain is Glutamate--tRNA ligase 2 (462 aa).

The short motif at 8 to 18 (PSPTGLLHVGG) is the 'HIGH' region element. The short motif at 227–231 (PLSKR) is the 'KMSKS' region element. Position 230 (Lys230) interacts with ATP.

This sequence belongs to the class-I aminoacyl-tRNA synthetase family. Glutamate--tRNA ligase type 1 subfamily. In terms of assembly, monomer.

The protein resides in the cytoplasm. The enzyme catalyses tRNA(Glu) + L-glutamate + ATP = L-glutamyl-tRNA(Glu) + AMP + diphosphate. Catalyzes the attachment of glutamate to tRNA(Glu) in a two-step reaction: glutamate is first activated by ATP to form Glu-AMP and then transferred to the acceptor end of tRNA(Glu). The chain is Glutamate--tRNA ligase 2 from Thermosipho melanesiensis (strain DSM 12029 / CIP 104789 / BI429).